The following is a 184-amino-acid chain: Bacterial microcompartment shell protein PduT (184 aa).

BMC domains lie at 4–86 (AIGI…PAIS) and 96–182 (AVGI…RQMV). Cys38 lines the [4Fe-4S] cluster pocket.

It belongs to the bacterial microcompartments protein family. In terms of assembly, homotrimerizes to form a pseudohexamer with a large central pore, which is probably the binding site for the [4Fe-4S] center. Interacts with PduS. Originally suggested to be a homotetramer; this is incorrect. [4Fe-4S] cluster is required as a cofactor.

It localises to the bacterial microcompartment. It participates in polyol metabolism; 1,2-propanediol degradation. Functionally, a minor shell protein of the bacterial microcompartment (BMC) dedicated to 1,2-propanediol (1,2-PD) degradation. Overexpression of this protein leads to cells with either deposits or having lamina-like structures in the cytoplasm. Not absolutely required to make artificial BMCs. May selectively transport specific metabolites. Expression of a cosmid containing the full 21-gene pdu operon in E.coli allows E.coli to grow on 1,2-propanediol (1,2-PD) with the appearance of bacterial microcompartments (BMC) in its cytoplasm. Its function is as follows. The 1,2-PD-specific bacterial microcompartment (BMC) concentrates low levels of 1,2-PD catabolic enzymes, concentrates volatile reaction intermediates thus enhancing pathway flux and keeps the level of toxic, mutagenic propionaldehyde low. The protein is Bacterial microcompartment shell protein PduT of Citrobacter freundii.